The chain runs to 205 residues: Lymphotoxin-alpha (205 aa).

A signal peptide spans 1-34 (MTPPERLFLSRVRGTPLHLLLLGLLLVLLPGAQG). Thr-41 is a glycosylation site (O-linked (GalNAc...) threonine). One can recognise a THD domain in the interval 63-205 (PAAHLIGDPS…STVFFGAFAL (143 aa)). N-linked (GlcNAc...) asparagine glycosylation occurs at Asn-96.

The protein belongs to the tumor necrosis factor family. Homotrimer, and heterotrimer of either two LTB and one LTA subunits or (less prevalent) two LTA and one LTB subunits. Interacts with TNFRSF14.

It localises to the secreted. The protein localises to the membrane. Cytokine that in its homotrimeric form binds to TNFRSF1A/TNFR1, TNFRSF1B/TNFBR and TNFRSF14/HVEM. In its heterotrimeric form with LTB binds to TNFRSF3/LTBR. Lymphotoxin is produced by lymphocytes and is cytotoxic for a wide range of tumor cells in vitro and in vivo. The sequence is that of Lymphotoxin-alpha (LTA) from Macaca mulatta (Rhesus macaque).